We begin with the raw amino-acid sequence, 914 residues long: Coatomer subunit beta' (914 aa).

WD repeat units follow at residues 13–54 (SRSD…KDFE), 55–94 (VCDV…KVHS), 97–136 (AHSD…ACQR), 140–180 (GHTH…ANFT), 183–224 (GHEK…CVQT), 227–266 (GHAQ…LETC), and 352–390 (ACEI…NKAF).

It belongs to the WD repeat COPB2 family. Oligomeric complex that consists of at least the alpha, beta, beta', gamma, delta, epsilon and zeta subunits.

The protein localises to the cytoplasm. Its subcellular location is the golgi apparatus membrane. It localises to the cytoplasmic vesicle. The protein resides in the COPI-coated vesicle membrane. Functionally, the coatomer is a cytosolic protein complex that binds to dilysine motifs and reversibly associates with Golgi non-clathrin-coated vesicles, which further mediate biosynthetic protein transport from the ER, via the Golgi up to the trans Golgi network. Coatomer complex is required for budding from Golgi membranes, and is essential for the retrograde Golgi-to-ER transport of dilysine-tagged proteins. In Drosophila melanogaster (Fruit fly), this protein is Coatomer subunit beta'.